A 130-amino-acid polypeptide reads, in one-letter code: Small ribosomal subunit protein uS11 (130 aa).

The disordered stretch occupies residues 111–130 (IRDVTPVPHNGSRPPKRRRA).

This sequence belongs to the universal ribosomal protein uS11 family. In terms of assembly, part of the 30S ribosomal subunit. Interacts with proteins S7 and S18. Binds to IF-3.

Functionally, located on the platform of the 30S subunit, it bridges several disparate RNA helices of the 16S rRNA. Forms part of the Shine-Dalgarno cleft in the 70S ribosome. This chain is Small ribosomal subunit protein uS11, found in Lactobacillus acidophilus (strain ATCC 700396 / NCK56 / N2 / NCFM).